The primary structure comprises 385 residues: DNA replication and repair protein RecF (385 aa).

Residue 30–37 coordinates ATP; the sequence is GRNGQGKT.

The protein belongs to the RecF family.

The protein resides in the cytoplasm. In terms of biological role, the RecF protein is involved in DNA metabolism; it is required for DNA replication and normal SOS inducibility. RecF binds preferentially to single-stranded, linear DNA. It also seems to bind ATP. The sequence is that of DNA replication and repair protein RecF from Leifsonia xyli subsp. xyli (strain CTCB07).